Consider the following 800-residue polypeptide: Aldehyde dehydrogenase family 16 member A1 (800 aa).

Belongs to the aldehyde dehydrogenase family. As to quaternary structure, interacts with SPG21.

The protein is Aldehyde dehydrogenase family 16 member A1 (ALDH16A1) of Bos taurus (Bovine).